Here is a 1710-residue protein sequence, read N- to C-terminus: Ankyrin repeat domain-containing protein 26 (1710 aa).

Residues 1–41 (MKKIFSKKGESPLGSFARRQRSSAGGGGEPGEGAYSQPGYH) form a disordered region. Ser11 and Ser15 each carry phosphoserine. 5 ANK repeats span residues 45-75 (RDLG…GLND), 79-108 (MNRT…QLNV), 112-141 (ENRT…DPNL), 145-174 (HGNT…NIEA), and 178-207 (DDLT…NVNA). Residues 222 to 274 (KEERIPKHSSQNSNSVDESSEDSLSRLSGKPGVDDSWPTSDDEDLNFDTKNVP) form a disordered region. 4 positions are modified to phosphoserine: Ser241, Ser261, Ser489, and Ser530. The tract at residues 504–630 (DSVPNKAGGM…EKRTSKESVN (127 aa)) is disordered. The stretch at 529–566 (ASEEEQEREGSENNQPQVEEERKKHRNNEMEVSANIHD) forms a coiled coil. The segment covering 569–580 (TDDAEDDDDDDG) has biased composition (acidic residues). Composition is skewed to basic and acidic residues over residues 586–602 (KSGE…ENKE) and 613–626 (KEVK…RTSK). The residue at position 631 (Ser631) is a Phosphoserine. Acidic residues predominate over residues 650-660 (DSSLSEIDEDE). Positions 650–698 (DSSLSEIDEDEGRPTKKTSNEKNKVKNQIQSMDDVDDLTQSSETASEDC) are disordered. Residues 661–673 (GRPTKKTSNEKNK) are compositionally biased toward basic and acidic residues. Coiled-coil stretches lie at residues 743–873 (KNHC…NARM), 905–1472 (EEEK…MVEL), 1517–1587 (NNFA…NTKL), and 1649–1674 (LSKM…LESG). A disordered region spans residues 892–912 (AQKKMNSENSHSHEEEKDLSH).

As to quaternary structure, interacts with TRIO. Interacts with GPS2. Interacts with CCDC85B. Interacts with HMMR.

Functionally, acts as a regulator of adipogenesis. Involved in the regulation of the feeding behavior. This Homo sapiens (Human) protein is Ankyrin repeat domain-containing protein 26.